Reading from the N-terminus, the 118-residue chain is Iron-sulfur cluster insertion protein ErpA (118 aa).

Iron-sulfur cluster is bound by residues Cys46, Cys110, and Cys112.

It belongs to the HesB/IscA family. Homodimer. Iron-sulfur cluster is required as a cofactor.

Its function is as follows. Required for insertion of 4Fe-4S clusters for at least IspG. The chain is Iron-sulfur cluster insertion protein ErpA from Psychromonas ingrahamii (strain DSM 17664 / CCUG 51855 / 37).